Here is a 335-residue protein sequence, read N- to C-terminus: MIEFQNVHKTYRVAGKDIPALHPTSLRVENGQVFGLIGHSGAGKSTLLRLINRLENPSGGTIVVDDEDVTALDASGLRRFRQQVGMIFQHFNLLSSKTVADNVALPLTLAGELSRSDIDRRVAELLDRVGLADHAKKYPAQLSGGQKQRVGIARALATKPKILLCDEATSALDPQTTASVLQLLAEINRELNLTIVLITHEMDVIRRVCDQVAVMDAGVIVEQGPVADVFLHPKHPTTRRFVQEDEQIDENEQRDDFAHVPGRIVRLTFQGDSTYAPLLGTVARETGVDYSILAGRIDRIKDTPYGQLTLAITGGDMEAAFARFTAADVHMEVLR.

The ABC transporter domain maps to 2 to 242; sequence IEFQNVHKTY…PKHPTTRRFV (241 aa). Residue 38-45 participates in ATP binding; it reads GHSGAGKS.

The protein belongs to the ABC transporter superfamily. Methionine importer (TC 3.A.1.24) family. In terms of assembly, the complex is composed of two ATP-binding proteins (MetN), two transmembrane proteins (MetI) and a solute-binding protein (MetQ).

The protein resides in the cell inner membrane. The enzyme catalyses L-methionine(out) + ATP + H2O = L-methionine(in) + ADP + phosphate + H(+). It catalyses the reaction D-methionine(out) + ATP + H2O = D-methionine(in) + ADP + phosphate + H(+). In terms of biological role, part of the ABC transporter complex MetNIQ involved in methionine import. Responsible for energy coupling to the transport system. This chain is Methionine import ATP-binding protein MetN 1, found in Pseudomonas fluorescens (strain ATCC BAA-477 / NRRL B-23932 / Pf-5).